Consider the following 247-residue polypeptide: Trypsin (247 aa).

The N-terminal stretch at 1–21 (LTTVISYFALVAFALVGVSYA) is a signal peptide. A propeptide spans 22-30 (TPKASINGR) (activation peptide). In terms of domain architecture, Peptidase S1 spans 31 to 247 (IVGGEMTDIS…QSNFPGVYGI (217 aa)). Residues cysteine 61 and cysteine 77 are joined by a disulfide bond. Active-site charge relay system residues include histidine 76 and aspartate 120. Cystine bridges form between cysteine 185/cysteine 201 and cysteine 212/cysteine 236. Serine 216 functions as the Charge relay system in the catalytic mechanism.

Belongs to the peptidase S1 family. In terms of tissue distribution, midgut.

Its subcellular location is the secreted. The protein localises to the extracellular space. It carries out the reaction Preferential cleavage: Arg-|-Xaa, Lys-|-Xaa.. This chain is Trypsin, found in Simulium vittatum (Striped black fly).